The primary structure comprises 759 residues: RNA-binding protein 28 (759 aa).

Alanine 2 is modified (N-acetylalanine). Residues 4-80 form the RRM 1 domain; that stretch reads LTLFVGRLPP…CKINVTVAKK (77 aa). Residues 84-105 form a disordered region; that stretch reads NKTKEKGKNENSECPKKEPKAK. Positions 85–101 are enriched in basic and acidic residues; that stretch reads KTKEKGKNENSECPKKE. Residues 114-191 enclose the RRM 2 domain; it reads ARLIIRNLSF…RTVAVDWAVA (78 aa). Serine 122 carries the phosphoserine modification. The interval 201-330 is disordered; that stretch reads VSAIGEEKSH…NKKKRKLPSD (130 aa). Residues 205–224 show a composition bias toward basic and acidic residues; it reads GEEKSHESKHQESVKKKGRE. Composition is skewed to acidic residues over residues 225–256 and 284–313; these read EEDM…EEEN and SEED…EEQE. RRM domains follow at residues 335 to 419 and 487 to 597; these read KTVF…LAVT and TRLC…RSLQ. Residue serine 397 is modified to Phosphoserine. The interval 594-759 is disordered; it reads RSLQKMRSKP…LAKRSKWFDS (166 aa). A compositionally biased stretch (basic and acidic residues) spans 615-640; that stretch reads PAKDQQQKAAQHHTEEQSKVPPEQKR. Residue lysine 653 forms a Glycyl lysine isopeptide (Lys-Gly) (interchain with G-Cter in SUMO2) linkage. A compositionally biased stretch (basic residues) spans 689–698; sequence VKPVHPKKPK. A compositionally biased stretch (polar residues) spans 700-715; that stretch reads QINQWKQEKQQLSSEQ.

Interacts with U1, U2, U4, U5, and U6 spliceosomal small nuclear RNAs (snRNAs). Ubiquitously expressed.

Its subcellular location is the nucleus. The protein localises to the nucleolus. In terms of biological role, nucleolar component of the spliceosomal ribonucleoprotein complexes. The protein is RNA-binding protein 28 (RBM28) of Homo sapiens (Human).